Reading from the N-terminus, the 206-residue chain is MRPGRLRLLVGLGNPGSKYVGTRHNIGFMALDKLAAQKSVSFRPQTKFHGLMAEVAVGSERVRLLMPQTYMNESGRAIRAAIDWFGLEVDQLLVLVDDMDLSLGRLRLRAQGSAGGHNGLRSAIQHLGTQDFCRLRIGIGAPGCTSEERRARTVSHVLGVFSRQESLLVDQVLDEVLMGLDLIQCLGLERAGNRLNAFQPEGCSAC.

Tyr19 is a tRNA binding site. Catalysis depends on His24, which acts as the Proton acceptor. Residues Tyr70, Asn72, and Asn118 each contribute to the tRNA site.

This sequence belongs to the PTH family. As to quaternary structure, monomer.

The protein resides in the cytoplasm. It carries out the reaction an N-acyl-L-alpha-aminoacyl-tRNA + H2O = an N-acyl-L-amino acid + a tRNA + H(+). In terms of biological role, hydrolyzes ribosome-free peptidyl-tRNAs (with 1 or more amino acids incorporated), which drop off the ribosome during protein synthesis, or as a result of ribosome stalling. Its function is as follows. Catalyzes the release of premature peptidyl moieties from peptidyl-tRNA molecules trapped in stalled 50S ribosomal subunits, and thus maintains levels of free tRNAs and 50S ribosomes. The chain is Peptidyl-tRNA hydrolase from Prochlorococcus marinus (strain MIT 9313).